Reading from the N-terminus, the 271-residue chain is NAD kinase (271 aa).

The Proton acceptor role is filled by Asp52. Residues 52-53 (DG), 129-130 (NE), Arg155, Asp157, and Ala192 contribute to the NAD(+) site.

The protein belongs to the NAD kinase family. Requires a divalent metal cation as cofactor.

It localises to the cytoplasm. It catalyses the reaction NAD(+) + ATP = ADP + NADP(+) + H(+). Involved in the regulation of the intracellular balance of NAD and NADP, and is a key enzyme in the biosynthesis of NADP. Catalyzes specifically the phosphorylation on 2'-hydroxyl of the adenosine moiety of NAD to yield NADP. This Geobacillus stearothermophilus (Bacillus stearothermophilus) protein is NAD kinase.